The chain runs to 177 residues: Parathyroid hormone-related protein (177 aa).

The N-terminal stretch at 1–24 is a signal peptide; sequence MLRRLVQQWSVLVFLLSYSVPSRG. The propeptide occupies 25-34; that stretch reads RSVEGLGRRL. The important for receptor binding stretch occupies residues 57-68; that stretch reads RFFLHHLIAEIH. Residues 74-177 are disordered; that stretch reads ATSEVSPNSK…TSLEPSSRTH (104 aa). A compositionally biased stretch (polar residues) spans 76 to 90; the sequence is SEVSPNSKPAPNTKN. Residues 108 to 129 carry the Nuclear localization signal motif; sequence TNKVETYKEQPLKTPGKKKKGK. A compositionally biased stretch (basic and acidic residues) spans 109 to 118; the sequence is NKVETYKEQP. Positions 122 to 132 are enriched in basic residues; sequence PGKKKKGKPGK. The segment covering 161-177 has biased composition (low complexity); that stretch reads PHTSPTSTSLEPSSRTH.

Belongs to the parathyroid hormone family. As to quaternary structure, PTHrP interacts with PTH1R (via N-terminal extracellular domain). There are several secretory forms, including osteostatin, arising from endoproteolytic cleavage of the initial translation product. Each of these secretory forms is believed to have one or more of its own receptors that mediates the normal paracrine, autocrine and endocrine actions.

It is found in the secreted. The protein resides in the cytoplasm. It localises to the nucleus. Its function is as follows. Neuroendocrine peptide which is a critical regulator of cellular and organ growth, development, migration, differentiation and survival and of epithelial calcium ion transport. Acts by binding to its receptor, PTH1R, activating G protein-coupled receptor signaling. Regulates endochondral bone development and epithelial-mesenchymal interactions during the formation of the mammary glands and teeth. Required for skeletal homeostasis. Promotes mammary mesenchyme differentiation and bud outgrowth by modulating mesenchymal cell responsiveness to BMPs. Up-regulates BMPR1A expression in the mammary mesenchyme and this increases the sensitivity of these cells to BMPs and allows them to respond to BMP4 in a paracrine and/or autocrine fashion. BMP4 signaling in the mesenchyme, in turn, triggers epithelial outgrowth and augments MSX2 expression, which causes the mammary mesenchyme to inhibit hair follicle formation within the nipple sheath. Potent inhibitor of osteoclastic bone resorption. The chain is Parathyroid hormone-related protein (Pthlh) from Rattus norvegicus (Rat).